Reading from the N-terminus, the 106-residue chain is ATP-dependent Clp protease adapter protein ClpS (106 aa).

Belongs to the ClpS family. As to quaternary structure, binds to the N-terminal domain of the chaperone ClpA.

In terms of biological role, involved in the modulation of the specificity of the ClpAP-mediated ATP-dependent protein degradation. This chain is ATP-dependent Clp protease adapter protein ClpS, found in Salmonella gallinarum (strain 287/91 / NCTC 13346).